Consider the following 245-residue polypeptide: 1-(5-phosphoribosyl)-5-[(5-phosphoribosylamino)methylideneamino] imidazole-4-carboxamide isomerase (245 aa).

Residue aspartate 8 is the Proton acceptor of the active site. The Proton donor role is filled by aspartate 131.

Belongs to the HisA/HisF family.

Its subcellular location is the cytoplasm. The catalysed reaction is 1-(5-phospho-beta-D-ribosyl)-5-[(5-phospho-beta-D-ribosylamino)methylideneamino]imidazole-4-carboxamide = 5-[(5-phospho-1-deoxy-D-ribulos-1-ylimino)methylamino]-1-(5-phospho-beta-D-ribosyl)imidazole-4-carboxamide. It participates in amino-acid biosynthesis; L-histidine biosynthesis; L-histidine from 5-phospho-alpha-D-ribose 1-diphosphate: step 4/9. This Neisseria meningitidis serogroup C / serotype 2a (strain ATCC 700532 / DSM 15464 / FAM18) protein is 1-(5-phosphoribosyl)-5-[(5-phosphoribosylamino)methylideneamino] imidazole-4-carboxamide isomerase.